A 241-amino-acid polypeptide reads, in one-letter code: Small ribosomal subunit protein uS2 (241 aa).

The protein belongs to the universal ribosomal protein uS2 family.

This Shigella flexneri serotype 5b (strain 8401) protein is Small ribosomal subunit protein uS2.